Reading from the N-terminus, the 261-residue chain is Thiamine thiazole synthase (261 aa).

NAD(+)-binding positions include alanine 33, 52–53 (ER), glycine 60, valine 124, and 152–154 (HVD). Positions 154 and 169 each coordinate Fe cation. Methionine 219 contacts NAD(+). Residue arginine 229 coordinates glycine.

It belongs to the THI4 family. As to quaternary structure, homooctamer; tetramer of dimers. It depends on Fe(2+) as a cofactor.

The enzyme catalyses hydrogen sulfide + glycine + NAD(+) = ADP-5-ethyl-4-methylthiazole-2-carboxylate + nicotinamide + 3 H2O + H(+). It participates in cofactor biosynthesis; thiamine diphosphate biosynthesis. In terms of biological role, involved in the biosynthesis of the thiazole moiety of thiamine. Catalyzes the conversion of NAD and glycine to adenosine diphosphate 5-(2-hydroxyethyl)-4-methylthiazole-2-carboxylate (ADT), an adenylated thiazole intermediate, using free sulfide as a source of sulfur. This is Thiamine thiazole synthase from Pyrobaculum islandicum (strain DSM 4184 / JCM 9189 / GEO3).